We begin with the raw amino-acid sequence, 336 residues long: S-adenosylmethionine:tRNA ribosyltransferase-isomerase (336 aa).

This sequence belongs to the QueA family. As to quaternary structure, monomer.

It is found in the cytoplasm. It catalyses the reaction 7-aminomethyl-7-carbaguanosine(34) in tRNA + S-adenosyl-L-methionine = epoxyqueuosine(34) in tRNA + adenine + L-methionine + 2 H(+). Its pathway is tRNA modification; tRNA-queuosine biosynthesis. Transfers and isomerizes the ribose moiety from AdoMet to the 7-aminomethyl group of 7-deazaguanine (preQ1-tRNA) to give epoxyqueuosine (oQ-tRNA). This Sulfurihydrogenibium sp. (strain YO3AOP1) protein is S-adenosylmethionine:tRNA ribosyltransferase-isomerase.